A 328-amino-acid polypeptide reads, in one-letter code: Serine protease 48 (328 aa).

The first 20 residues, 1–20 (MGPAGCAFTLLLLLGISVCG), serve as a signal peptide directing secretion. The region spanning 28-267 (VVGGQDAAAG…YQKWINATIS (240 aa)) is the Peptidase S1 domain. Cysteines 53 and 69 form a disulfide. Catalysis depends on charge relay system residues H68 and D114. 3 disulfide bridges follow: C148–C226, C181–C205, and C216–C244. S220 functions as the Charge relay system in the catalytic mechanism. A glycan (N-linked (GlcNAc...) asparagine) is linked at N263.

The protein belongs to the peptidase S1 family.

It is found in the secreted. The chain is Serine protease 48 (PRSS48) from Homo sapiens (Human).